A 196-amino-acid polypeptide reads, in one-letter code: Large ribosomal subunit protein eL15 (196 aa).

Residues 159 to 196 (RAYRGRTSAGQRGRGQQKRGKGTEHTRPSIRANDKRGK) are disordered. Positions 179–196 (KGTEHTRPSIRANDKRGK) are enriched in basic and acidic residues.

This sequence belongs to the eukaryotic ribosomal protein eL15 family.

In Natronomonas pharaonis (strain ATCC 35678 / DSM 2160 / CIP 103997 / JCM 8858 / NBRC 14720 / NCIMB 2260 / Gabara) (Halobacterium pharaonis), this protein is Large ribosomal subunit protein eL15.